The sequence spans 236 residues: Phosphoribosylaminoimidazole-succinocarboxamide synthase (236 aa).

The protein belongs to the SAICAR synthetase family.

It carries out the reaction 5-amino-1-(5-phospho-D-ribosyl)imidazole-4-carboxylate + L-aspartate + ATP = (2S)-2-[5-amino-1-(5-phospho-beta-D-ribosyl)imidazole-4-carboxamido]succinate + ADP + phosphate + 2 H(+). The protein operates within purine metabolism; IMP biosynthesis via de novo pathway; 5-amino-1-(5-phospho-D-ribosyl)imidazole-4-carboxamide from 5-amino-1-(5-phospho-D-ribosyl)imidazole-4-carboxylate: step 1/2. The polypeptide is Phosphoribosylaminoimidazole-succinocarboxamide synthase (Pseudomonas aeruginosa (strain LESB58)).